Reading from the N-terminus, the 73-residue chain is MPKKDGAIEIEGRVVEPLPNAMFRVELQNGHRVLAHISGKMRQHYIRILPEDRVVVELSPYDLSRGRIVYRYK.

The S1-like domain maps to 1–73 (MPKKDGAIEI…SRGRIVYRYK (73 aa)).

The protein belongs to the IF-1 family. Component of the 30S ribosomal translation pre-initiation complex which assembles on the 30S ribosome in the order IF-2 and IF-3, IF-1 and N-formylmethionyl-tRNA(fMet); mRNA recruitment can occur at any time during PIC assembly.

The protein resides in the cytoplasm. In terms of biological role, one of the essential components for the initiation of protein synthesis. Stabilizes the binding of IF-2 and IF-3 on the 30S subunit to which N-formylmethionyl-tRNA(fMet) subsequently binds. Helps modulate mRNA selection, yielding the 30S pre-initiation complex (PIC). Upon addition of the 50S ribosomal subunit IF-1, IF-2 and IF-3 are released leaving the mature 70S translation initiation complex. This is Translation initiation factor IF-1 from Frankia alni (strain DSM 45986 / CECT 9034 / ACN14a).